The chain runs to 85 residues: uncharacterized protein (85 aa).

2 disordered regions span residues 1–22 (MFAPPSSLFVPATAPAPSTSGF) and 41–85 (EKER…SFLR). Positions 75-85 (FPSNYRGSFLR) are enriched in polar residues.

This is an uncharacterized protein from Dryophytes versicolor (chameleon treefrog).